A 331-amino-acid chain; its full sequence is ESX-3 secretion system protein EccE3 (331 aa).

2 consecutive transmembrane segments (helical) span residues 11-31 (GRVTLVLLAVVPVALAYPWQS) and 37-57 (LLGVAAAVVIGLFGFWRGLYF).

It belongs to the EccE family. As to quaternary structure, part of the ESX-3 / type VII secretion system (T7SS), which is composed of cytosolic and membrane components. The ESX-3 membrane complex is composed of EccB3, EccC3, EccD3 and EccE3.

It is found in the cell inner membrane. In terms of biological role, part of the ESX-3 specialized secretion system, which is important for iron and zinc uptake or homeostasis. In Mycobacterium tuberculosis (strain CDC 1551 / Oshkosh), this protein is ESX-3 secretion system protein EccE3.